The sequence spans 223 residues: Thylakoid lumenal 15.0 kDa protein 2, chloroplastic (223 aa).

The protein resides in the plastid. Its subcellular location is the chloroplast thylakoid lumen. This is Thylakoid lumenal 15.0 kDa protein 2, chloroplastic from Arabidopsis thaliana (Mouse-ear cress).